Here is a 357-residue protein sequence, read N- to C-terminus: MQLSDFSFDLPKSLISFHPYFIRSTCRLMVMYGHTGMIFHKRFFNIIDEINSGDLIILNNTQVIPARFFGKKESGGKVEVLVEKILGINNILASIKNSKNINIGSKIFFGYKDKIKGSVVDCKNSFFEIFFHDNIDSAIDIINNIGEIPLPPYIKRFRNKLDVDLYQTVYKKKTGSIAAPTAGLHFDLPLLEALHNKGVDIDYITLHIGSGTFQPIRRVQIEEHIMHSESVEVSSSVIQKIKSCKKKGGRIIAVGTSTLRALESAYHSSEWSDSQDFISDTNIFIYPGYKHNIVDALITNFHFPESTLIMLVCSFLGYKNTMNAYNTAIVNKYSFFSYGDAMYITHNKLAPYENFII.

This sequence belongs to the QueA family. Monomer.

The protein localises to the cytoplasm. It carries out the reaction 7-aminomethyl-7-carbaguanosine(34) in tRNA + S-adenosyl-L-methionine = epoxyqueuosine(34) in tRNA + adenine + L-methionine + 2 H(+). Its pathway is tRNA modification; tRNA-queuosine biosynthesis. Its function is as follows. Transfers and isomerizes the ribose moiety from AdoMet to the 7-aminomethyl group of 7-deazaguanine (preQ1-tRNA) to give epoxyqueuosine (oQ-tRNA). In Buchnera aphidicola subsp. Acyrthosiphon pisum (strain APS) (Acyrthosiphon pisum symbiotic bacterium), this protein is S-adenosylmethionine:tRNA ribosyltransferase-isomerase.